The chain runs to 129 residues: HTH-type transcriptional regulator DdrOP3 (129 aa).

The region spanning 7–61 is the HTH cro/C1-type domain; it reads LRELRQERGLRLKDIAGAAQISVPYLSDLERGRTNPSLETLQSLASTYGITVHDL. Positions 18–37 form a DNA-binding region, H-T-H motif; that stretch reads LKDIAGAAQISVPYLSDLER.

In terms of processing, cleaved between Leu-106 and Arg-107 by the IrrE metalloprotease after exposure to radiation. Cleavage inactivates DdrOP3, leading to derepression of the target genes.

Repressor specific for genes preceded by a radiation/desiccation response motif (RDRM) site, which is present upstream of several radiation-induced genes. This Deinococcus deserti (strain DSM 17065 / CIP 109153 / LMG 22923 / VCD115) protein is HTH-type transcriptional regulator DdrOP3.